We begin with the raw amino-acid sequence, 587 residues long: MAKESIRRRLAAILAADAVGYSRLMERDEKSTHTLLMARWKEVLEPLVGIHQGRVFKRTGDGVLVEFGSAVNAVECAAALQQAMAAANRDLPEDRAIVLRVGVNLGDIMVEDSDLFGDGVNVAARIEALADPGGVAISDGIHEYVHGRTDIDFVDSGYHEVKNIERPVHIWTWSPKDRAREPPNIAAEPPPQLPAKPSIAVLPFDNMSGDPEQGYFADGITEDIITDLSKVSGLFVIARNSSFAYKGKTPDIRKVSRELGVRYVLEGSVRRAANRIRINAQMIDGTTGGHLWAERYDRGLEDIFAVQDEVTRTIVNALRVKLTAGEEERRESRGKVDPEAYDLLVRSRQAILQFNALSSMEARRMLHRVLEIDPGMAAAHASLSIIALTDFINQWNGATPDNLTQALGLAQEAIDTDGSEPQGHYTLALALSWMRRLDEAEHAAERAIELDPNSANAYTALGTIRDFQGRHEEALALYTRAHRLDPQFDLSLHFQGRALLNLGRFDEAEVAFKRRLLLAPRSDMTRFYLACLYGRTGRHEEARGYWREVLGVNPSFSVDHLRRSLPYQDPHLMDRLVEGLREAGVSI.

Residues Ala12–Glu127 enclose the Guanylate cyclase domain. TPR repeat units lie at residues Leu343–Met376, Pro421–Ser454, Ala455–Phe488, Leu490–Ser522, and Met524–Phe556.

Belongs to the adenylyl cyclase class-3 family.

The catalysed reaction is ATP = 3',5'-cyclic AMP + diphosphate. The polypeptide is Putative adenylate cyclase 3 (cya3) (Rhizobium meliloti (strain 1021) (Ensifer meliloti)).